A 198-amino-acid chain; its full sequence is Chitin synthase 2 (198 aa).

Belongs to the chitin synthase family. Class III subfamily.

Its subcellular location is the cell membrane. The enzyme catalyses [(1-&gt;4)-N-acetyl-beta-D-glucosaminyl](n) + UDP-N-acetyl-alpha-D-glucosamine = [(1-&gt;4)-N-acetyl-beta-D-glucosaminyl](n+1) + UDP + H(+). Functionally, polymerizes chitin, a structural polymer of the cell wall and septum, by transferring the sugar moiety of UDP-GlcNAc to the non-reducing end of the growing chitin polymer. This Rhinocladiella atrovirens protein is Chitin synthase 2 (CHS2).